Here is a 97-residue protein sequence, read N- to C-terminus: Large ribosomal subunit protein uL23 (97 aa).

Belongs to the universal ribosomal protein uL23 family. Part of the 50S ribosomal subunit. Contacts protein L29, and trigger factor when it is bound to the ribosome.

One of the early assembly proteins it binds 23S rRNA. One of the proteins that surrounds the polypeptide exit tunnel on the outside of the ribosome. Forms the main docking site for trigger factor binding to the ribosome. The polypeptide is Large ribosomal subunit protein uL23 (Brucella suis (strain ATCC 23445 / NCTC 10510)).